We begin with the raw amino-acid sequence, 347 residues long: Phenylalanine--tRNA ligase alpha subunit (347 aa).

Residue glutamate 265 coordinates Mg(2+).

It belongs to the class-II aminoacyl-tRNA synthetase family. Phe-tRNA synthetase alpha subunit type 1 subfamily. Tetramer of two alpha and two beta subunits. The cofactor is Mg(2+).

Its subcellular location is the cytoplasm. It carries out the reaction tRNA(Phe) + L-phenylalanine + ATP = L-phenylalanyl-tRNA(Phe) + AMP + diphosphate + H(+). This chain is Phenylalanine--tRNA ligase alpha subunit, found in Wolbachia sp. subsp. Brugia malayi (strain TRS).